The sequence spans 209 residues: Probable peptide export ATP-binding protein YydI (209 aa).

In terms of domain architecture, ABC transporter spans 1–207; it reads MNIANYTLKV…SVDKLIEVYI (207 aa). 33–40 is an ATP binding site; the sequence is GKNGVGKS.

This sequence belongs to the ABC transporter superfamily. As to quaternary structure, the complex is composed of two ATP-binding proteins (YydI), two transmembrane proteins (YydJ).

Functionally, suggested to be part of an ABC transporter complex YydIJ involved in export of the modified peptide YydF. Responsible for energy coupling to the transport system. The protein is Probable peptide export ATP-binding protein YydI (yydI) of Bacillus subtilis (strain 168).